The primary structure comprises 216 residues: N-(5'-phosphoribosyl)anthranilate isomerase (216 aa).

The protein belongs to the TrpF family.

It catalyses the reaction N-(5-phospho-beta-D-ribosyl)anthranilate = 1-(2-carboxyphenylamino)-1-deoxy-D-ribulose 5-phosphate. It participates in amino-acid biosynthesis; L-tryptophan biosynthesis; L-tryptophan from chorismate: step 3/5. This is N-(5'-phosphoribosyl)anthranilate isomerase from Leptospira borgpetersenii serovar Hardjo-bovis (strain JB197).